A 292-amino-acid chain; its full sequence is Ribosomal protein L11 methyltransferase (292 aa).

S-adenosyl-L-methionine contacts are provided by Thr-144, Gly-165, Asp-187, and Asn-229.

It belongs to the methyltransferase superfamily. PrmA family.

It is found in the cytoplasm. The catalysed reaction is L-lysyl-[protein] + 3 S-adenosyl-L-methionine = N(6),N(6),N(6)-trimethyl-L-lysyl-[protein] + 3 S-adenosyl-L-homocysteine + 3 H(+). Methylates ribosomal protein L11. In Pseudomonas putida (strain ATCC 700007 / DSM 6899 / JCM 31910 / BCRC 17059 / LMG 24140 / F1), this protein is Ribosomal protein L11 methyltransferase.